Consider the following 211-residue polypeptide: Thiamine-phosphate synthase (211 aa).

Residues 37-41 (QLRIK) and asparagine 69 each bind 4-amino-2-methyl-5-(diphosphooxymethyl)pyrimidine. Positions 70 and 89 each coordinate Mg(2+). Serine 108 is a 4-amino-2-methyl-5-(diphosphooxymethyl)pyrimidine binding site. Residue 134 to 136 (TQT) coordinates 2-[(2R,5Z)-2-carboxy-4-methylthiazol-5(2H)-ylidene]ethyl phosphate. 4-amino-2-methyl-5-(diphosphooxymethyl)pyrimidine is bound at residue lysine 137. 2-[(2R,5Z)-2-carboxy-4-methylthiazol-5(2H)-ylidene]ethyl phosphate is bound by residues glycine 166 and 186–187 (VS).

It belongs to the thiamine-phosphate synthase family. Mg(2+) serves as cofactor.

The catalysed reaction is 2-[(2R,5Z)-2-carboxy-4-methylthiazol-5(2H)-ylidene]ethyl phosphate + 4-amino-2-methyl-5-(diphosphooxymethyl)pyrimidine + 2 H(+) = thiamine phosphate + CO2 + diphosphate. It catalyses the reaction 2-(2-carboxy-4-methylthiazol-5-yl)ethyl phosphate + 4-amino-2-methyl-5-(diphosphooxymethyl)pyrimidine + 2 H(+) = thiamine phosphate + CO2 + diphosphate. The enzyme catalyses 4-methyl-5-(2-phosphooxyethyl)-thiazole + 4-amino-2-methyl-5-(diphosphooxymethyl)pyrimidine + H(+) = thiamine phosphate + diphosphate. Its pathway is cofactor biosynthesis; thiamine diphosphate biosynthesis; thiamine phosphate from 4-amino-2-methyl-5-diphosphomethylpyrimidine and 4-methyl-5-(2-phosphoethyl)-thiazole: step 1/1. Condenses 4-methyl-5-(beta-hydroxyethyl)thiazole monophosphate (THZ-P) and 2-methyl-4-amino-5-hydroxymethyl pyrimidine pyrophosphate (HMP-PP) to form thiamine monophosphate (TMP). In Escherichia coli O1:K1 / APEC, this protein is Thiamine-phosphate synthase.